The following is a 533-amino-acid chain: Light-independent protochlorophyllide reductase subunit B (533 aa).

Asp-36 serves as a coordination point for [4Fe-4S] cluster. Residue Asp-292 is the Proton donor of the active site. 428 to 429 (GL) contributes to the substrate binding site.

This sequence belongs to the ChlB/BchB/BchZ family. In terms of assembly, protochlorophyllide reductase is composed of three subunits; BchL, BchN and BchB. Forms a heterotetramer of two BchB and two BchN subunits. Requires [4Fe-4S] cluster as cofactor.

It carries out the reaction chlorophyllide a + oxidized 2[4Fe-4S]-[ferredoxin] + 2 ADP + 2 phosphate = protochlorophyllide a + reduced 2[4Fe-4S]-[ferredoxin] + 2 ATP + 2 H2O. It functions in the pathway porphyrin-containing compound metabolism; bacteriochlorophyll biosynthesis (light-independent). Functionally, component of the dark-operative protochlorophyllide reductase (DPOR) that uses Mg-ATP and reduced ferredoxin to reduce ring D of protochlorophyllide (Pchlide) to form chlorophyllide a (Chlide). This reaction is light-independent. The NB-protein (BchN-BchB) is the catalytic component of the complex. The sequence is that of Light-independent protochlorophyllide reductase subunit B from Prosthecochloris aestuarii (strain DSM 271 / SK 413).